The primary structure comprises 196 residues: Pyridoxal 5'-phosphate synthase subunit PdxT (196 aa).

Residue 47–49 coordinates L-glutamine; it reads GES. Cys-79 (nucleophile) is an active-site residue. L-glutamine contacts are provided by residues Arg-106 and 134 to 135; that span reads IR. Active-site charge relay system residues include His-170 and Glu-172.

The protein belongs to the glutaminase PdxT/SNO family. As to quaternary structure, in the presence of PdxS, forms a dodecamer of heterodimers. Only shows activity in the heterodimer.

It carries out the reaction aldehydo-D-ribose 5-phosphate + D-glyceraldehyde 3-phosphate + L-glutamine = pyridoxal 5'-phosphate + L-glutamate + phosphate + 3 H2O + H(+). The enzyme catalyses L-glutamine + H2O = L-glutamate + NH4(+). Its pathway is cofactor biosynthesis; pyridoxal 5'-phosphate biosynthesis. In terms of biological role, catalyzes the hydrolysis of glutamine to glutamate and ammonia as part of the biosynthesis of pyridoxal 5'-phosphate. The resulting ammonia molecule is channeled to the active site of PdxS. The polypeptide is Pyridoxal 5'-phosphate synthase subunit PdxT (Bacillus pumilus (strain SAFR-032)).